The chain runs to 1171 residues: DExH-box ATP-dependent RNA helicase DExH15 chloroplastic (1171 aa).

A chloroplast-targeting transit peptide spans 1–58; it reads MNTLPVVSLTASSSFKFFHFPSLHRSLSHSPNFSFTKSLILNPNHLSFKSTLNSLSPS. The segment covering 53–62 has biased composition (polar residues); the sequence is NSLSPSQSQL. The tract at residues 53 to 111 is disordered; the sequence is NSLSPSQSQLYEEEDDEEEEEEDEDDDDEAADEYDNISDEIRNSDDDDDDEETEFSVDL. Acidic residues-rich tracts occupy residues 63 to 90 and 97 to 107; these read YEEE…DNIS and DDDDDDEETEF. Residues 163 to 327 form the Helicase ATP-binding domain; sequence IEAFLRGSSV…WIGEIHGKTE (165 aa). 176–183 provides a ligand contact to ATP; sequence APTSSGKT. The DEVH box signature appears at 275–278; that stretch reads DEVH. The region spanning 424-620 is the Helicase C-terminal domain; that stretch reads QISDTLWHLQ…ASYGMVLNLV (197 aa).

It belongs to the DExH box helicase family.

The protein localises to the plastid. Its subcellular location is the chloroplast. It is found in the cytoplasmic granule. It catalyses the reaction ATP + H2O = ADP + phosphate + H(+). Its function is as follows. RNA helicase involved in group II intron splicing. Essential protein required during embryogenesis. Involved in post-transcriptional gene silencing. Modulates the determination of cell fate. Necessary for normal plasmodesmata (PD) development and aperture regulation. This chain is DExH-box ATP-dependent RNA helicase DExH15 chloroplastic (ISE2), found in Arabidopsis thaliana (Mouse-ear cress).